We begin with the raw amino-acid sequence, 516 residues long: AMP phosphorylase (516 aa).

AMP-binding positions include Gly169, 195-200 (SRAITG), and Thr204. Catalysis depends on Asp257, which acts as the Proton donor. Ser265 and Lys289 together coordinate AMP.

It belongs to the thymidine/pyrimidine-nucleoside phosphorylase family. Type 2 subfamily.

It carries out the reaction AMP + phosphate = alpha-D-ribose 1,5-bisphosphate + adenine. The catalysed reaction is CMP + phosphate = cytosine + alpha-D-ribose 1,5-bisphosphate. The enzyme catalyses UMP + phosphate = alpha-D-ribose 1,5-bisphosphate + uracil. Its function is as follows. Catalyzes the conversion of AMP and phosphate to adenine and ribose 1,5-bisphosphate (R15P). Exhibits phosphorylase activity toward CMP and UMP in addition to AMP. Functions in an archaeal AMP degradation pathway, together with R15P isomerase and RubisCO. The polypeptide is AMP phosphorylase (Methanospirillum hungatei JF-1 (strain ATCC 27890 / DSM 864 / NBRC 100397 / JF-1)).